The following is a 469-amino-acid chain: Ribosomal protein uS12 methylthiotransferase RimO (469 aa).

An MTTase N-terminal domain is found at 17–132 (PRVGFVSLGC…VMDAVHLNLP (116 aa)). Cys-26, Cys-62, Cys-91, Cys-167, Cys-171, and Cys-174 together coordinate [4Fe-4S] cluster. The region spanning 153-395 (LTPKHYAYLK…AVAEEVSSLK (243 aa)) is the Radical SAM core domain. The 73-residue stretch at 397 to 469 (QQRVGATMQV…QGHDLVAIPV (73 aa)) folds into the TRAM domain.

Belongs to the methylthiotransferase family. RimO subfamily. [4Fe-4S] cluster is required as a cofactor.

It localises to the cytoplasm. The enzyme catalyses L-aspartate(89)-[ribosomal protein uS12]-hydrogen + (sulfur carrier)-SH + AH2 + 2 S-adenosyl-L-methionine = 3-methylsulfanyl-L-aspartate(89)-[ribosomal protein uS12]-hydrogen + (sulfur carrier)-H + 5'-deoxyadenosine + L-methionine + A + S-adenosyl-L-homocysteine + 2 H(+). Catalyzes the methylthiolation of an aspartic acid residue of ribosomal protein uS12. This chain is Ribosomal protein uS12 methylthiotransferase RimO, found in Polaromonas sp. (strain JS666 / ATCC BAA-500).